Reading from the N-terminus, the 2678-residue chain is Mediator of RNA polymerase II transcription subunit 13 (2678 aa).

Disordered regions lie at residues 1–52 (MMGT…GYNS), 140–285 (SKKP…QPIS), 495–524 (NSNN…QQQQ), 553–615 (QQQQ…NNNI), 852–993 (SPSS…QQQQ), 1070–1253 (TSHY…KPFL), 1278–1394 (LPHN…QDES), 1462–1502 (SPFS…NNHH), 1806–1838 (FSGS…SMDD), 2075–2105 (QNQN…QTQT), 2225–2307 (SSSS…QEQK), and 2656–2678 (KLTP…SNNT). Composition is skewed to low complexity over residues 15-48 (SGSN…PTTS), 144-162 (INNS…TDSS), and 169-186 (NSPS…NSNN). Residues 187 to 206 (VTKDSPPNATNKMSTSPKSL) show a composition bias toward polar residues. Residues 207–276 (SPTISNNNNN…SPPTVASVTS (70 aa)) are compositionally biased toward low complexity. Low complexity-rich tracts occupy residues 553–573 (QQQQ…DNNN) and 587–615 (SSSS…NNNI). A compositionally biased stretch (polar residues) spans 855-872 (SPLTQHPSSPHSPFNNVN). Positions 901–916 (KKRHGKSQKKGRSSKR) are enriched in basic residues. Over residues 922-950 (SNNNNNNNTTTTSTITATTTTTTPTAATT) the composition is skewed to low complexity. 2 stretches are compositionally biased toward polar residues: residues 966–979 (NIQE…LTTV) and 1079–1090 (PTQNGSQKNNQR). Residues 1109 to 1150 (TTTTTTTTTTTPTPNPTTTTTQPQTQPQQQSQQQQQPQQTNP) show a composition bias toward low complexity. Positions 1151-1195 (ILPTNSNLITNQKPQQYQPPLQDPFQSIDSQQPKSIQSPTLTNQP) are enriched in polar residues. Residues 1201-1211 (PTLTNQPLQQY) are compositionally biased toward low complexity. Over residues 1281–1306 (NTEQSPSNDDLSNPNHLHHGTPTSAI) the composition is skewed to polar residues. Positions 1312-1321 (SSSSSGNNMI) are enriched in low complexity. A compositionally biased stretch (gly residues) spans 1322–1343 (GSGGIVGSGGGNTNVSGSGGGM). The segment covering 1359–1371 (PHHHHHHHHHHHP) has biased composition (basic residues). Residues 1475–1497 (TTTNNNNNHNNNNNNNHPNNHHQ) are compositionally biased toward low complexity. The segment covering 1806-1819 (FSGSSGLNNSNDRN) has biased composition (polar residues). Positions 2658 to 2678 (TPNSKQSPSPINSPHLNSNNT) are enriched in polar residues.

The protein belongs to the Mediator complex subunit 13 family. In terms of assembly, component of the Mediator complex.

The protein resides in the nucleus. In terms of biological role, component of the Mediator complex, a coactivator involved in the regulated transcription of nearly all RNA polymerase II-dependent genes. Mediator functions as a bridge to convey information from gene-specific regulatory proteins to the basal RNA polymerase II transcription machinery. Mediator is recruited to promoters by direct interactions with regulatory proteins and serves as a scaffold for the assembly of a functional preinitiation complex with RNA polymerase II and the general transcription factors. Required for the starvation-induced activation of the ACA (adenylyl cyclase) expression pathway at the growth/differentiation transition. This Dictyostelium discoideum (Social amoeba) protein is Mediator of RNA polymerase II transcription subunit 13 (amiB).